The chain runs to 263 residues: Acyl-[acyl-carrier-protein]--UDP-N-acetylglucosamine O-acyltransferase (263 aa).

The protein belongs to the transferase hexapeptide repeat family. LpxA subfamily. As to quaternary structure, homotrimer.

It localises to the cytoplasm. The catalysed reaction is a (3R)-hydroxyacyl-[ACP] + UDP-N-acetyl-alpha-D-glucosamine = a UDP-3-O-[(3R)-3-hydroxyacyl]-N-acetyl-alpha-D-glucosamine + holo-[ACP]. It participates in glycolipid biosynthesis; lipid IV(A) biosynthesis; lipid IV(A) from (3R)-3-hydroxytetradecanoyl-[acyl-carrier-protein] and UDP-N-acetyl-alpha-D-glucosamine: step 1/6. Involved in the biosynthesis of lipid A, a phosphorylated glycolipid that anchors the lipopolysaccharide to the outer membrane of the cell. This chain is Acyl-[acyl-carrier-protein]--UDP-N-acetylglucosamine O-acyltransferase, found in Tolumonas auensis (strain DSM 9187 / NBRC 110442 / TA 4).